The sequence spans 386 residues: Probable zinc transporter zrg17 (386 aa).

6 helical membrane-spanning segments follow: residues 102–122 (ILFF…ILLT), 128–148 (IVEG…SFLV), 163–183 (MELL…MNLL), 208–228 (VHIH…FALL), 243–263 (FFHG…SLGY), and 268–288 (FLSH…GFSI).

This sequence belongs to the cation diffusion facilitator (CDF) transporter (TC 2.A.4) family. SLC30A subfamily. As to quaternary structure, interacts with cis4.

The protein resides in the cytoplasm. It is found in the nucleus membrane. In terms of biological role, probable transporter involved in the regulation of zinc homeostasis. The protein is Probable zinc transporter zrg17 (zrg17) of Schizosaccharomyces pombe (strain 972 / ATCC 24843) (Fission yeast).